We begin with the raw amino-acid sequence, 458 residues long: RuvB-like helicase 1 (458 aa).

Basic and acidic residues predominate over residues 1–18 (MVQITEVKENQSSRESRT). The interval 1 to 20 (MVQITEVKENQSSRESRTAA) is disordered. An ATP-binding site is contributed by 73-80 (GPPATGKT).

The protein belongs to the RuvB family. In terms of assembly, may form heterododecamers with RVB2. Component of the SWR1 chromatin remodeling complex, the INO80 chromatin remodeling complex, and of the R2TP complex.

It localises to the nucleus. It catalyses the reaction ATP + H2O = ADP + phosphate + H(+). DNA helicase which participates in several chromatin remodeling complexes, including the SWR1 and the INO80 complexes. The SWR1 complex mediates the ATP-dependent exchange of histone H2A for the H2A variant HZT1 leading to transcriptional regulation of selected genes by chromatin remodeling. The INO80 complex remodels chromatin by shifting nucleosomes and is involved in DNA repair. Also involved in pre-rRNA processing. This Candida albicans (strain SC5314 / ATCC MYA-2876) (Yeast) protein is RuvB-like helicase 1 (RVB1).